Reading from the N-terminus, the 119-residue chain is Large ribosomal subunit protein uL18 (119 aa).

It belongs to the universal ribosomal protein uL18 family. Part of the 50S ribosomal subunit; part of the 5S rRNA/L5/L18/L25 subcomplex. Contacts the 5S and 23S rRNAs.

Functionally, this is one of the proteins that bind and probably mediate the attachment of the 5S RNA into the large ribosomal subunit, where it forms part of the central protuberance. The chain is Large ribosomal subunit protein uL18 from Chlorobium luteolum (strain DSM 273 / BCRC 81028 / 2530) (Pelodictyon luteolum).